A 283-amino-acid polypeptide reads, in one-letter code: Bifunctional protein FolD (283 aa).

NADP(+)-binding positions include 165-167 (GRS) and S190.

This sequence belongs to the tetrahydrofolate dehydrogenase/cyclohydrolase family. Homodimer.

It carries out the reaction (6R)-5,10-methylene-5,6,7,8-tetrahydrofolate + NADP(+) = (6R)-5,10-methenyltetrahydrofolate + NADPH. The enzyme catalyses (6R)-5,10-methenyltetrahydrofolate + H2O = (6R)-10-formyltetrahydrofolate + H(+). It participates in one-carbon metabolism; tetrahydrofolate interconversion. In terms of biological role, catalyzes the oxidation of 5,10-methylenetetrahydrofolate to 5,10-methenyltetrahydrofolate and then the hydrolysis of 5,10-methenyltetrahydrofolate to 10-formyltetrahydrofolate. The chain is Bifunctional protein FolD from Methylibium petroleiphilum (strain ATCC BAA-1232 / LMG 22953 / PM1).